The chain runs to 379 residues: Early boundary activity protein 3 (379 aa).

As to quaternary structure, the heterotrimeric Elba complex consists of Elba1, Elba2 and Elba3.

It localises to the nucleus. Its function is as follows. The heterotrimeric Elba complex is required for chromatin domain boundary function during early embryogenesis. It binds to a 8-bp sequence 5'-CCAATAAG-3' in the Fab-7 insulator or boundary element in the bithorax complex and contributes to its insulator or boundary activity. Elba3 lacks DNA-binding activity and plays the role of an adapter protein, bringing Elba1 and 2 together, thereby establishing a complex that recognizes the asymmetric sequence motif through the BEN domains of Elba1 and 2. The sequence is that of Early boundary activity protein 3 from Drosophila melanogaster (Fruit fly).